A 95-amino-acid chain; its full sequence is Co-chaperonin GroES (95 aa).

The protein belongs to the GroES chaperonin family. Heptamer of 7 subunits arranged in a ring. Interacts with the chaperonin GroEL.

Its subcellular location is the cytoplasm. In terms of biological role, together with the chaperonin GroEL, plays an essential role in assisting protein folding. The GroEL-GroES system forms a nano-cage that allows encapsulation of the non-native substrate proteins and provides a physical environment optimized to promote and accelerate protein folding. GroES binds to the apical surface of the GroEL ring, thereby capping the opening of the GroEL channel. The polypeptide is Co-chaperonin GroES (Staphylococcus saprophyticus subsp. saprophyticus (strain ATCC 15305 / DSM 20229 / NCIMB 8711 / NCTC 7292 / S-41)).